We begin with the raw amino-acid sequence, 382 residues long: Probable trehalose-phosphate phosphatase 2 (382 aa).

Belongs to the trehalose phosphatase family. The cofactor is a divalent metal cation. In terms of tissue distribution, expressed in roots and shoots.

The enzyme catalyses alpha,alpha-trehalose 6-phosphate + H2O = alpha,alpha-trehalose + phosphate. Its pathway is glycan biosynthesis; trehalose biosynthesis. In terms of biological role, removes the phosphate from trehalose 6-phosphate to produce free trehalose. Trehalose accumulation in plant may improve abiotic stress tolerance. This Oryza sativa subsp. japonica (Rice) protein is Probable trehalose-phosphate phosphatase 2 (TPP2).